The sequence spans 196 residues: Ribonuclease HII (196 aa).

Residues Met-1–Leu-196 enclose the RNase H type-2 domain. Residues Asp-7, Glu-8, and Asp-103 each contribute to the a divalent metal cation site.

The protein belongs to the RNase HII family. Mn(2+) serves as cofactor. The cofactor is Mg(2+).

It localises to the cytoplasm. It catalyses the reaction Endonucleolytic cleavage to 5'-phosphomonoester.. In terms of biological role, endonuclease that specifically degrades the RNA of RNA-DNA hybrids. The chain is Ribonuclease HII from Novosphingobium aromaticivorans (strain ATCC 700278 / DSM 12444 / CCUG 56034 / CIP 105152 / NBRC 16084 / F199).